Reading from the N-terminus, the 54-residue chain is Chymosin (54 aa).

Positions 1–27 are cleaved as a propeptide — activation peptide; the sequence is SEITRVPLHKGKSLRKALKEHGLLEBF.

This sequence belongs to the peptidase A1 family. As to quaternary structure, monomer.

The enzyme catalyses Broad specificity similar to that of pepsin A. Clots milk by cleavage of a single 104-Ser-Phe-|-Met-Ala-107 bond in kappa-chain of casein.. Chymosin is synthesized in the mucosa of the stomach. The enzyme hydrolyzes casein to paracasein. This Felis catus (Cat) protein is Chymosin (CYM).